Here is a 235-residue protein sequence, read N- to C-terminus: Uridylate kinase (235 aa).

ATP is bound at residue 8 to 11; the sequence is KFSG. Residues 16–21 form an involved in allosteric activation by GTP region; sequence GKEGYG. UMP is bound at residue glycine 50. Residues glycine 51 and arginine 55 each coordinate ATP. UMP contacts are provided by residues aspartate 71 and 132 to 139; that span reads TGNPYFTT. The ATP site is built by threonine 159, tyrosine 165, and aspartate 168.

The protein belongs to the UMP kinase family. As to quaternary structure, homohexamer.

The protein localises to the cytoplasm. The enzyme catalyses UMP + ATP = UDP + ADP. It functions in the pathway pyrimidine metabolism; CTP biosynthesis via de novo pathway; UDP from UMP (UMPK route): step 1/1. Allosterically activated by GTP. Inhibited by UTP. In terms of biological role, catalyzes the reversible phosphorylation of UMP to UDP. The polypeptide is Uridylate kinase (Sulfurovum sp. (strain NBC37-1)).